Consider the following 1343-residue polypeptide: DNA-directed RNA polymerase subunit beta (1343 aa).

This sequence belongs to the RNA polymerase beta chain family. In terms of assembly, the RNAP catalytic core consists of 2 alpha, 1 beta, 1 beta' and 1 omega subunit. When a sigma factor is associated with the core the holoenzyme is formed, which can initiate transcription.

The catalysed reaction is RNA(n) + a ribonucleoside 5'-triphosphate = RNA(n+1) + diphosphate. DNA-dependent RNA polymerase catalyzes the transcription of DNA into RNA using the four ribonucleoside triphosphates as substrates. The sequence is that of DNA-directed RNA polymerase subunit beta from Shewanella loihica (strain ATCC BAA-1088 / PV-4).